Here is a 500-residue protein sequence, read N- to C-terminus: Protein C13 (500 aa).

The BTB domain maps to 27–89 (EEIVFIMTVG…IETGIVTIDL (63 aa)). Kelch repeat units lie at residues 301 to 348 (ILYL…IFKN), 349 to 395 (RIYV…GTDN), 397 to 440 (LYVV…YHHG), and 441 to 490 (YIYM…IIED).

This sequence belongs to the poxviruses Kelch family.

This Swinepox virus (strain Kasza) (SWPV) protein is Protein C13.